Reading from the N-terminus, the 310-residue chain is GTP-binding protein GTR1 (310 aa).

The GTP site is built by Ser-15, Gly-18, Lys-19, Ser-20, Ser-21, Thr-35, Thr-41, Gly-64, His-126, Asp-129, and Ile-166.

Belongs to the GTR/RAG GTP-binding protein family. Heterodimer; with GTR2. Component of the GSE complex composed of GTR1, GTR2, SLM4, MEH1 and LTV1. Interacts with GTR2; the interaction is direct. Interacts with TOR1.

The protein localises to the vacuole membrane. The catalysed reaction is GTP + H2O = GDP + phosphate + H(+). Functionally, GTPase involved in activation of the TORC1 signaling pathway, which promotes growth and represses autophagy in nutrient-rich conditions. Also required for TORC1 inactivation during nitrogen starvation. Required for intracellular sorting of GAP1 out of the endosome. Functionally associated with the inorganic phosphate transporter PHO84, and may be involved in regulating its function or localization. The protein is GTP-binding protein GTR1 (GTR1) of Saccharomyces cerevisiae (strain ATCC 204508 / S288c) (Baker's yeast).